Consider the following 168-residue polypeptide: Mitochondrial inner membrane protein SHH4 (168 aa).

Residues 1–23 (MSSTKFLKPLCRIRAFHTSIARS) constitute a mitochondrion transit peptide. At 24–65 (FTIPFLPKIPQKPGGVSGTANDSSYMPPESRAQGSYHWIVER) the chain is on the mitochondrial matrix side. A helical membrane pass occupies residues 66–86 (GLSLAVLPLIAVPLVTTGPIS). At 87-92 (TFTDTF) the chain is on the mitochondrial intermembrane side. A helical transmembrane segment spans residues 93–113 (LSLVLLGHCHIGFQSCIIDYI). Cysteine 101 contributes to the heme binding site. Tyrosine 112 serves as a coordination point for a ubiquinone. Residues 114-120 (SERVYGK) are Mitochondrial matrix-facing. Residues 121-141 (VHHYAMYLLSLGSFLSFVGIY) traverse the membrane as a helical segment. Residues 142 to 168 (KLESQEAGLIASLKSLWDNKPVEKKRQ) lie on the Mitochondrial intermembrane side of the membrane.

This sequence belongs to the CybS family. As to quaternary structure, interacts with SDH3.

It localises to the mitochondrion inner membrane. Homolog of SDH4, but seems not to be a stoichiometric subunit of either the succinate dehydrogenase (SDH) complex or the mitochondrial inner membrane translocase TIM22 complex. The protein is Mitochondrial inner membrane protein SHH4 of Saccharomyces cerevisiae (strain ATCC 204508 / S288c) (Baker's yeast).